The sequence spans 335 residues: Deoxyhypusine hydroxylase (335 aa).

HEAT-like PBS-type repeat units follow at residues 74–100, 107–133, 203–233, 241–267, and 274–301; these read LKHE…VLED, CRHE…LRDD, KRYR…LAEG, FRHE…TLSD, and VRHE…FVND. Residues H76, E77, H109, and E110 each contribute to the Fe cation site. Positions 243, 244, 276, and 277 each coordinate Fe cation.

Belongs to the deoxyhypusine hydroxylase family. Requires Fe(2+) as cofactor.

It localises to the cytoplasm. The protein localises to the nucleus. The enzyme catalyses [eIF5A protein]-deoxyhypusine + AH2 + O2 = [eIF5A protein]-hypusine + A + H2O. The protein operates within protein modification; eIF5A hypusination. In terms of biological role, catalyzes the hydroxylation of the N(6)-(4-aminobutyl)-L-lysine intermediate to form hypusine, an essential post-translational modification only found in mature eIF-5A factor. This Coccidioides immitis (strain RS) (Valley fever fungus) protein is Deoxyhypusine hydroxylase.